Consider the following 381-residue polypeptide: uncharacterized protein (381 aa).

11 helical membrane passes run 10 to 29 (IFFSLFGIFIFSCINAINFY), 75 to 93 (IILISLSLLIICTINLIIL), 98 to 117 (LIKINFILINFGIFSYFTSR), 130 to 147 (YLFLACIILLWAGGNLMV), 157 to 179 (TNNTIVICALLYCINILTEFLHY), 199 to 221 (IELQLLTGFVVSYITLNILWYYE), 236 to 255 (LILKYIFLTICFAIIPICYI), 262 to 284 (YFANLSLNIILLICFILLPIHGT), 289 to 311 (NILYIILIGNCLGAIFICNILIL), 323 to 340 (ALLSYFSMCSIGIYAGAL), and 355 to 374 (LFSVFAVVGSFVTYHFWYFI).

The protein localises to the cell membrane. This is an uncharacterized protein from Rickettsia prowazekii (strain Madrid E).